The primary structure comprises 145 residues: Glycine-rich protein (145 aa).

Residues Met1–Ala19 form the signal peptide.

Component of the acid-insoluble and acid-soluble organic matrix of calcified layers of the shell (at protein level).

The protein resides in the secreted. This chain is Glycine-rich protein, found in Lottia gigantea (Giant owl limpet).